A 469-amino-acid chain; its full sequence is Tubulin gamma chain (469 aa).

142-148 provides a ligand contact to GTP; it reads AGGTGSG.

It belongs to the tubulin family.

Its subcellular location is the cytoplasm. The protein localises to the cytoskeleton. It is found in the microtubule organizing center. It localises to the spindle pole body. Its function is as follows. Tubulin is the major constituent of microtubules. The gamma chain is found at microtubule organizing centers (MTOC) such as the spindle poles or the centrosome, suggesting that it is involved in the minus-end nucleation of microtubule assembly. This is Tubulin gamma chain (TUB4) from Microbotryum violaceum (Anther smut fungus).